The chain runs to 1100 residues: Guanylate cyclase 2G (1100 aa).

A signal peptide spans Met1 to Ala43. Topologically, residues Ala44 to Ala481 are extracellular. N-linked (GlcNAc...) asparagine glycosylation is found at Asn55, Asn85, Asn94, Asn418, and Asn443. A helical membrane pass occupies residues Val482–Leu502. The Cytoplasmic portion of the chain corresponds to Trp503 to Leu1100. In terms of domain architecture, Protein kinase spans Ser549 to Leu826. The Guanylate cyclase domain occupies Thr901–Glu1031.

The protein belongs to the adenylyl cyclase class-4/guanylyl cyclase family. As to quaternary structure, homooligomer. May interact with NPR1/GC-A. In terms of processing, N-glycosylated. In terms of tissue distribution, expressed in lung, kidney and skeletal muscle. Low levels in intestine.

Its subcellular location is the cell membrane. The protein localises to the cytoplasm. It carries out the reaction GTP = 3',5'-cyclic GMP + diphosphate. This is Guanylate cyclase 2G (Gucy2g) from Rattus norvegicus (Rat).